The chain runs to 382 residues: uncharacterized protein (382 aa).

The next 12 membrane-spanning stretches (helical) occupy residues 14–34 (GLLLLTLAIAVLNTLVPLWLA), 45–65 (VVSSSYFTGNLVGTLLTGYVI), 79–99 (FIFAAGCAGLGLMIGFWSWLA), 102–122 (FVAGVGCAMIWVVVESALMCS), 131–151 (LLAAYMMVYYVGTFLGQLLVS), 157–177 (LMSVLPWVTGLTLAGILPLLF), 204–224 (LGVNGCIISGIVLGSLYGLMP), 235–255 (ASIGFWMAVLVSAGILGQWPI), 270–290 (VQVFVVILGSIAMLSQAAMAP), 291–311 (ALFILGAAGFTLYPVAMAWAC), 325–345 (ALLLSYTVGSLLGPSFTAMLM), and 348–368 (FSDNLLFIMIASVSFIYLLML).

It belongs to the major facilitator superfamily. YcaD (TC 2.A.1.26) family.

The protein localises to the cell inner membrane. This is an uncharacterized protein from Shigella sonnei (strain Ss046).